A 76-amino-acid polypeptide reads, in one-letter code: Dermaseptin-SP2 (76 aa).

The N-terminal stretch at 1–22 (MAFLKKSLFLVLFLGLVSLSIC) is a signal peptide. Residues 23 to 45 (EEEKRENEDEEEQEDEEQSEEKR) constitute a propeptide that is removed on maturation. The tract at residues 24 to 44 (EEKRENEDEEEQEDEEQSEEK) is disordered. A compositionally biased stretch (acidic residues) spans 30-41 (EDEEEQEDEEQS). At Gln73 the chain carries Glutamine amide. Positions 74 to 76 (GEQ) are excised as a propeptide.

In terms of tissue distribution, expressed by the skin glands.

Its subcellular location is the secreted. It is found in the target cell membrane. Functionally, antimicrobial peptide with activity against Gram-positive and Gram-negative bacteria and fungi. Has been tested against E.coli (MIC=2.68-8 uM), S.aureus (ATCC 25923, MIC=2.68-8 uM), S.aureus (ATCC oxacillin resistant, MIC=2.68 uM), K.pneumoniae (MIC=10.71 uM) and C.albicans (MIC=10.71-32 uM). Probably acts by disturbing membrane functions with its alpha-helical amphipathic structure. May penetrate bacterial membranes, but stay at the mammalian membrane surface. Shows a very weak hemolytic activity. This is Dermaseptin-SP2 from Agalychnis spurrelli (Gliding leaf frog).